Here is a 354-residue protein sequence, read N- to C-terminus: S-adenosylmethionine:tRNA ribosyltransferase-isomerase (354 aa).

This sequence belongs to the QueA family. As to quaternary structure, monomer.

Its subcellular location is the cytoplasm. It carries out the reaction 7-aminomethyl-7-carbaguanosine(34) in tRNA + S-adenosyl-L-methionine = epoxyqueuosine(34) in tRNA + adenine + L-methionine + 2 H(+). The protein operates within tRNA modification; tRNA-queuosine biosynthesis. Transfers and isomerizes the ribose moiety from AdoMet to the 7-aminomethyl group of 7-deazaguanine (preQ1-tRNA) to give epoxyqueuosine (oQ-tRNA). This chain is S-adenosylmethionine:tRNA ribosyltransferase-isomerase, found in Dichelobacter nodosus (strain VCS1703A).